A 437-amino-acid chain; its full sequence is Trigger factor (437 aa).

One can recognise a PPIase FKBP-type domain in the interval 164–249 (GDFAKFDFEG…LHEIQCKKIG (86 aa)).

The protein belongs to the FKBP-type PPIase family. Tig subfamily.

It is found in the cytoplasm. It catalyses the reaction [protein]-peptidylproline (omega=180) = [protein]-peptidylproline (omega=0). In terms of biological role, involved in protein export. Acts as a chaperone by maintaining the newly synthesized protein in an open conformation. Functions as a peptidyl-prolyl cis-trans isomerase. This is Trigger factor from Campylobacter hominis (strain ATCC BAA-381 / DSM 21671 / CCUG 45161 / LMG 19568 / NCTC 13146 / CH001A).